The chain runs to 456 residues: Chromosomal replication initiator protein DnaA 1 (456 aa).

A domain I, interacts with DnaA modulators region spans residues 1 to 68; that stretch reads MRAWEEFLLL…KANLINNNGK (68 aa). Positions 68 to 101 are domain II; sequence KPIRVRVTSLDKSTPFKESQIQQEKTAYFTMQYG. The domain III, AAA+ region stretch occupies residues 102–320; that stretch reads DIDPQMSFAN…HALTTLAKRV (219 aa). ATP is bound by residues Ser-150, Gly-152, Lys-153, and Thr-154. Positions 321 to 456 are domain IV, binds dsDNA; that stretch reads AYKKLSHQLL…AYQSLDLIVD (136 aa).

Belongs to the DnaA family. As to quaternary structure, oligomerizes as a right-handed, spiral filament on DNA at oriC.

The protein resides in the cytoplasm. Its function is as follows. Plays an essential role in the initiation and regulation of chromosomal replication. ATP-DnaA binds to the origin of replication (oriC) to initiate formation of the DNA replication initiation complex once per cell cycle. Binds the DnaA box (a 9 base pair repeat at the origin) and separates the double-stranded (ds)DNA. Forms a right-handed helical filament on oriC DNA; dsDNA binds to the exterior of the filament while single-stranded (ss)DNA is stabiized in the filament's interior. The ATP-DnaA-oriC complex binds and stabilizes one strand of the AT-rich DNA unwinding element (DUE), permitting loading of DNA polymerase. After initiation quickly degrades to an ADP-DnaA complex that is not apt for DNA replication. Binds acidic phospholipids. The protein is Chromosomal replication initiator protein DnaA 1 of Chlamydia muridarum (strain MoPn / Nigg).